The sequence spans 295 residues: GTPase Era (295 aa).

The 168-residue stretch at 4–171 folds into the Era-type G domain; it reads KSGFVTIIGR…IKQIVSFLPE (168 aa). Residues 12-19 are G1; that stretch reads GRPNVGKS. 12-19 serves as a coordination point for GTP; the sequence is GRPNVGKS. The segment at 38–42 is G2; that stretch reads QTTRN. Residues 59–62 form a G3 region; it reads DTPG. GTP contacts are provided by residues 59–63 and 121–124; these read DTPGI and NKID. Residues 121–124 are G4; that stretch reads NKID. A G5 region spans residues 150-152; the sequence is ISA. The region spanning 202-280 is the KH type-2 domain; that stretch reads LDQEIPHGIA…FLELWVKVNE (79 aa).

This sequence belongs to the TRAFAC class TrmE-Era-EngA-EngB-Septin-like GTPase superfamily. Era GTPase family. Monomer.

The protein localises to the cytoplasm. The protein resides in the cell membrane. In terms of biological role, an essential GTPase that binds both GDP and GTP, with rapid nucleotide exchange. Plays a role in 16S rRNA processing and 30S ribosomal subunit biogenesis and possibly also in cell cycle regulation and energy metabolism. The chain is GTPase Era from Alkaliphilus metalliredigens (strain QYMF).